We begin with the raw amino-acid sequence, 331 residues long: 5,10-methylenetetrahydromethanopterin reductase (331 aa).

Belongs to the mer family.

The protein localises to the cytoplasm. The enzyme catalyses 5-methyl-5,6,7,8-tetrahydromethanopterin + oxidized coenzyme F420-(gamma-L-Glu)(n) + H(+) = 5,10-methylenetetrahydromethanopterin + reduced coenzyme F420-(gamma-L-Glu)(n). It functions in the pathway one-carbon metabolism; methanogenesis from CO(2); methyl-coenzyme M from 5,10-methylene-5,6,7,8-tetrahydromethanopterin: step 1/2. In terms of biological role, catalyzes the reversible reduction of methylene-H(4)MPT to methyl-H(4)MPT. This Methanocaldococcus jannaschii (strain ATCC 43067 / DSM 2661 / JAL-1 / JCM 10045 / NBRC 100440) (Methanococcus jannaschii) protein is 5,10-methylenetetrahydromethanopterin reductase.